The sequence spans 206 residues: Probable GTP-binding protein EngB (206 aa).

In terms of domain architecture, EngB-type G spans 27–201 (SGIEVAFAGR…EEKLNQWYSK (175 aa)). Residues 35 to 42 (GRSNAGKS), 62 to 66 (GRTQL), 80 to 83 (DLPG), 147 to 150 (TKAD), and 180 to 182 (FSS) each bind GTP. Mg(2+) contacts are provided by Ser-42 and Thr-64.

This sequence belongs to the TRAFAC class TrmE-Era-EngA-EngB-Septin-like GTPase superfamily. EngB GTPase family. The cofactor is Mg(2+).

Its function is as follows. Necessary for normal cell division and for the maintenance of normal septation. The polypeptide is Probable GTP-binding protein EngB (Idiomarina loihiensis (strain ATCC BAA-735 / DSM 15497 / L2-TR)).